The following is a 505-amino-acid chain: ATP synthase subunit alpha (505 aa).

169–176 lines the ATP pocket; the sequence is GDRQTGKT.

This sequence belongs to the ATPase alpha/beta chains family. In terms of assembly, F-type ATPases have 2 components, CF(1) - the catalytic core - and CF(0) - the membrane proton channel. CF(1) has five subunits: alpha(3), beta(3), gamma(1), delta(1), epsilon(1). CF(0) has three main subunits: a(1), b(2) and c(9-12). The alpha and beta chains form an alternating ring which encloses part of the gamma chain. CF(1) is attached to CF(0) by a central stalk formed by the gamma and epsilon chains, while a peripheral stalk is formed by the delta and b chains.

The protein resides in the cell membrane. It catalyses the reaction ATP + H2O + 4 H(+)(in) = ADP + phosphate + 5 H(+)(out). Functionally, produces ATP from ADP in the presence of a proton gradient across the membrane. The alpha chain is a regulatory subunit. The chain is ATP synthase subunit alpha from Alkaliphilus oremlandii (strain OhILAs) (Clostridium oremlandii (strain OhILAs)).